The chain runs to 1183 residues: LRR receptor-like serine/threonine-protein kinase FLS2 (1183 aa).

The signal sequence occupies residues Met1 to Ala41. At Ala42 to Gly809 the chain is on the extracellular side. A disulfide bridge links Cys87 with Cys94. Residues Asn88 and Asn120 are each glycosylated (N-linked (GlcNAc...) asparagine). LRR repeat units follow at residues Ala97 to Asn120, Ile121 to Leu145, Glu147 to Cys169, Ala171 to Leu193, Ser194 to Leu217, Lys218 to Leu241, Ser242 to Cys265, Asn267 to Leu289, Thr290 to Cys313, Ser315 to Leu337, Pro338 to Leu361, Asn363 to Leu385, and Arg386 to Cys409. The cysteines at positions 167 and 189 are disulfide-linked. N-linked (GlcNAc...) asparagine glycans are attached at residues Asn168 and Asn181. An N-linked (GlcNAc...) asparagine glycan is attached at Asn267. N-linked (GlcNAc...) asparagine glycans are attached at residues Asn363, Asn395, Asn408, and Asn414. 14 LRR repeats span residues Leu433 to Cys457, Gln459 to Gln480, Leu481 to Met505, Lys507 to Met529, Ser530 to Leu553, Gln555 to Leu577, Arg578 to Arg600, Leu601 to Ser625, Ser627 to Leu651, Val652 to Cys675, Lys676 to Gln699, Asp701 to Leu724, Lys725 to Leu748, and Thr749 to Asn773. Asn483, Asn504, and Asn528 each carry an N-linked (GlcNAc...) asparagine glycan. N-linked (GlcNAc...) asparagine glycosylation occurs at Asn591. A glycan (N-linked (GlcNAc...) asparagine) is linked at Asn634. N-linked (GlcNAc...) asparagine glycosylation is found at Asn707, Asn747, Asn755, and Asn773. The chain crosses the membrane as a helical span at residues Leu810–Ile830. The Cytoplasmic segment spans residues Leu831–Asp1183. The Protein kinase domain occupies Phe876–Leu1179. ATP is bound by residues Ile882 to Val890 and Lys908. Residue Asp1013 is the Proton acceptor of the active site.

The protein belongs to the protein kinase superfamily. Ser/Thr protein kinase family. In terms of assembly, interacts with SERK2.

Its subcellular location is the cell membrane. The enzyme catalyses L-seryl-[protein] + ATP = O-phospho-L-seryl-[protein] + ADP + H(+). The catalysed reaction is L-threonyl-[protein] + ATP = O-phospho-L-threonyl-[protein] + ADP + H(+). Constitutes the pattern-recognition receptor (PPR) that determines the specific perception of flagellin (flg22), a potent elicitor of the defense response to pathogen-associated molecular patterns (PAMPs). Recognizes flg22 from Pseudomonas aeruginosa and Acidovorax avenae. flg22 is a peptide derived from the bacterial flagellin N-terminus sequence. Does not recognize flg22 from Xanthomonas oryzae pv. oryzae (Xoo) or Xanthomonas oryzae pv. oryzicola (Xoc). The chain is LRR receptor-like serine/threonine-protein kinase FLS2 from Oryza sativa subsp. japonica (Rice).